The primary structure comprises 419 residues: eIF5-mimic protein 1 (419 aa).

The tract at residues 1-22 is disordered; the sequence is MNKHQKPVLTGQRFKTRKRDEK. K117 is subject to N6-acetyllysine. Residues 248–415 enclose the W2 domain; it reads VQQSLGTRKE…QNAEEESESE (168 aa). A phosphoserine mark is found at S412, S414, and S419.

Belongs to the BZW family. In terms of assembly, interacts with EIF3E, EIF2S2 and EIF3C. Expressed at high levels in heart, and at lower levels in skeletal muscle, spleen and lung. Expressed at low levels in brain regions where nascent and immature neurons are present.

The protein localises to the cytoplasm. Translation initiation regulator which represses non-AUG initiated translation and repeat-associated non-AUG (RAN) initiated translation by acting as a competitive inhibitor of eukaryotic translation initiation factor 5 (EIF5) function. Increases the accuracy of translation initiation by impeding EIF5-dependent translation from non-AUG codons by competing with it for interaction with EIF2S2 within the 43S pre-initiation complex (PIC) in an EIF3C-binding dependent manner. The protein is eIF5-mimic protein 1 (Bzw2) of Rattus norvegicus (Rat).